A 542-amino-acid polypeptide reads, in one-letter code: Phosphoglucomutase (542 aa).

Substrate is bound by residues Thr17, Arg21, 112–113, and Lys125; that span reads SH. Ser112 serves as the catalytic Phosphoserine intermediate. Ser112 is a binding site for Mg(2+). Positions 276, 278, and 280 each coordinate Mg(2+). Residues 280–281, Thr343, 362–364, Lys375, and Arg495 each bind substrate; these read DR and EES.

The protein belongs to the phosphohexose mutase family. The cofactor is Mg(2+).

It catalyses the reaction alpha-D-glucose 1-phosphate = alpha-D-glucose 6-phosphate. Functionally, this enzyme participates in both the breakdown and synthesis of glucose. Required for the synthesis of capsular polysaccharide and normal lipopolysaccharide. The polypeptide is Phosphoglucomutase (pgm) (Rhizobium radiobacter (Agrobacterium tumefaciens)).